The following is a 472-amino-acid chain: Cysteine--tRNA ligase (472 aa).

Cys-28 is a binding site for Zn(2+). The short motif at 30–40 (PTVYNYIHIGN) is the 'HIGH' region element. Zn(2+)-binding residues include Cys-212, His-237, and Glu-241. A 'KMSKS' region motif is present at residues 271 to 275 (KMSKS). Residue Lys-274 participates in ATP binding.

The protein belongs to the class-I aminoacyl-tRNA synthetase family. In terms of assembly, monomer. Requires Zn(2+) as cofactor.

The protein resides in the cytoplasm. The catalysed reaction is tRNA(Cys) + L-cysteine + ATP = L-cysteinyl-tRNA(Cys) + AMP + diphosphate. This is Cysteine--tRNA ligase from Limosilactobacillus fermentum (strain NBRC 3956 / LMG 18251) (Lactobacillus fermentum).